The sequence spans 159 residues: 2-C-methyl-D-erythritol 2,4-cyclodiphosphate synthase (159 aa).

Positions 10 and 12 each coordinate a divalent metal cation. 4-CDP-2-C-methyl-D-erythritol 2-phosphate is bound by residues 10-12 (DVH) and 36-37 (HS). Residue H44 participates in a divalent metal cation binding. 4-CDP-2-C-methyl-D-erythritol 2-phosphate is bound by residues 58–60 (DIG), 63–67 (FPDTD), 102–108 (AQAPRMA), 134–137 (TTSE), F141, and R144.

This sequence belongs to the IspF family. As to quaternary structure, homotrimer. A divalent metal cation serves as cofactor.

The catalysed reaction is 4-CDP-2-C-methyl-D-erythritol 2-phosphate = 2-C-methyl-D-erythritol 2,4-cyclic diphosphate + CMP. It functions in the pathway isoprenoid biosynthesis; isopentenyl diphosphate biosynthesis via DXP pathway; isopentenyl diphosphate from 1-deoxy-D-xylulose 5-phosphate: step 4/6. Functionally, involved in the biosynthesis of isopentenyl diphosphate (IPP) and dimethylallyl diphosphate (DMAPP), two major building blocks of isoprenoid compounds. Catalyzes the conversion of 4-diphosphocytidyl-2-C-methyl-D-erythritol 2-phosphate (CDP-ME2P) to 2-C-methyl-D-erythritol 2,4-cyclodiphosphate (ME-CPP) with a corresponding release of cytidine 5-monophosphate (CMP). This is 2-C-methyl-D-erythritol 2,4-cyclodiphosphate synthase from Cellvibrio japonicus (strain Ueda107) (Pseudomonas fluorescens subsp. cellulosa).